Here is a 210-residue protein sequence, read N- to C-terminus: Proteasome subunit beta (210 aa).

The propeptide at 1–9 (MDNDKHLKG) is removed in mature form; by autocatalysis. Catalysis depends on Thr10, which acts as the Nucleophile.

It belongs to the peptidase T1B family. The 20S proteasome core is composed of 14 alpha and 14 beta subunits that assemble into four stacked heptameric rings, resulting in a barrel-shaped structure. The two inner rings, each composed of seven catalytic beta subunits, are sandwiched by two outer rings, each composed of seven alpha subunits. The catalytic chamber with the active sites is on the inside of the barrel. Has a gated structure, the ends of the cylinder being occluded by the N-termini of the alpha-subunits. Is capped at one or both ends by the proteasome regulatory ATPase, PAN.

The protein localises to the cytoplasm. The enzyme catalyses Cleavage of peptide bonds with very broad specificity.. Its activity is regulated as follows. The formation of the proteasomal ATPase PAN-20S proteasome complex, via the docking of the C-termini of PAN into the intersubunit pockets in the alpha-rings, triggers opening of the gate for substrate entry. Interconversion between the open-gate and close-gate conformations leads to a dynamic regulation of the 20S proteasome proteolysis activity. Its function is as follows. Component of the proteasome core, a large protease complex with broad specificity involved in protein degradation. In Methanohalophilus mahii (strain ATCC 35705 / DSM 5219 / SLP), this protein is Proteasome subunit beta.